A 325-amino-acid polypeptide reads, in one-letter code: 5-dehydro-2-deoxygluconokinase (325 aa).

It belongs to the carbohydrate kinase PfkB family.

It carries out the reaction 5-dehydro-2-deoxy-D-gluconate + ATP = 6-phospho-5-dehydro-2-deoxy-D-gluconate + ADP + H(+). The protein operates within polyol metabolism; myo-inositol degradation into acetyl-CoA; acetyl-CoA from myo-inositol: step 5/7. Catalyzes the phosphorylation of 5-dehydro-2-deoxy-D-gluconate (2-deoxy-5-keto-D-gluconate or DKG) to 6-phospho-5-dehydro-2-deoxy-D-gluconate (DKGP). The chain is 5-dehydro-2-deoxygluconokinase from Listeria innocua serovar 6a (strain ATCC BAA-680 / CLIP 11262).